A 671-amino-acid chain; its full sequence is Sodium, potassium, lithium and rubidium/H(+) antiporter (671 aa).

The next 11 helical transmembrane spans lie at 7 to 29 (VLVL…FIPV), 46 to 66 (GLHI…PLLF), 83 to 103 (PILL…GYTI), 110 to 130 (IPLP…VVAV), 156 to 176 (ASGL…AFSI), 182 to 202 (SFVL…FFII), 228 to 248 (FVIY…VVAG), 276 to 296 (IILF…IPDV), 315 to 335 (ILII…LFWA), 364 to 384 (GAVT…GSPF), and 389 to 409 (LIIF…SVLL).

This sequence belongs to the monovalent cation:proton antiporter 1 (CPA1) transporter (TC 2.A.36) family. Nhak (TC 2.A.36.3.2) subfamily.

It is found in the cell membrane. Functionally, transporter involved in the efflux of sodium, potassium, lithium and rubidium. The polypeptide is Sodium, potassium, lithium and rubidium/H(+) antiporter (nhaK) (Bacillus pumilus (strain SAFR-032)).